The chain runs to 186 residues: Probable chorismate pyruvate-lyase (186 aa).

Positions 80, 118, and 170 each coordinate substrate.

Belongs to the UbiC family.

The protein resides in the cytoplasm. The catalysed reaction is chorismate = 4-hydroxybenzoate + pyruvate. It functions in the pathway cofactor biosynthesis; ubiquinone biosynthesis. Functionally, removes the pyruvyl group from chorismate, with concomitant aromatization of the ring, to provide 4-hydroxybenzoate (4HB) for the ubiquinone pathway. The polypeptide is Probable chorismate pyruvate-lyase (Pseudomonas savastanoi pv. phaseolicola (strain 1448A / Race 6) (Pseudomonas syringae pv. phaseolicola (strain 1448A / Race 6))).